Reading from the N-terminus, the 172-residue chain is Ribosome maturation factor RimM (172 aa).

The PRC barrel domain occupies 96–168 (EGEFYYHQII…RVDVELMEGL (73 aa)).

It belongs to the RimM family. Binds ribosomal protein uS19.

It localises to the cytoplasm. Functionally, an accessory protein needed during the final step in the assembly of 30S ribosomal subunit, possibly for assembly of the head region. Essential for efficient processing of 16S rRNA. May be needed both before and after RbfA during the maturation of 16S rRNA. It has affinity for free ribosomal 30S subunits but not for 70S ribosomes. In Streptococcus pyogenes serotype M6 (strain ATCC BAA-946 / MGAS10394), this protein is Ribosome maturation factor RimM.